Reading from the N-terminus, the 1186-residue chain is Syntaxin-binding protein 5-like (1186 aa).

M1 carries the N-acetylmethionine modification. Residues 15 to 40 (ASSPGSGSSSGSNSGGGAGSGSVHPA) are disordered. Residues 16–26 (SSPGSGSSSGS) are compositionally biased toward low complexity. 10 WD repeats span residues 74 to 107 (TALA…CYCQ), 114 to 153 (VLQL…SLKF), 158 to 194 (ITYC…GYVI), 213 to 247 (HLSD…ELRV), 253 to 285 (IHSI…PSRP), 307 to 349 (PILK…KAIT), 357 to 391 (IVEF…VVDL), 413 to 490 (TCTA…YKLK), 518 to 629 (QMIY…ELVI), and 643 to 705 (TSLA…IADN). The residue at position 568 (T568) is a Phosphothreonine. Residues S574, S589, and S593 each carry the phosphoserine modification. At T596 the chain carries Phosphothreonine. S599 is modified (phosphoserine). The residue at position 709 (R709) is an Omega-N-methylarginine. Over residues 748 to 769 (TSDHVNGHCTSPTSQSCSSGKR) the composition is skewed to polar residues. Residues 748–771 (TSDHVNGHCTSPTSQSCSSGKRLS) form a disordered region. Phosphoserine is present on residues S763, S765, S766, S771, S772, S793, S800, S812, S820, S822, and S823. WD repeat units follow at residues 832 to 889 (ITAL…SGTF), 898 to 969 (TFSC…QTCL), 974 to 1018 (ITET…LDVN), and 1032 to 1055 (CFTN…TYSQ). T1093 is modified (phosphothreonine). Residues 1121-1181 (SIEGMKGAAG…HELMLKYKDK (61 aa)) form the v-SNARE coiled-coil homology domain.

The protein belongs to the WD repeat L(2)GL family. In terms of assembly, interacts with STX1A and STX4. In terms of processing, phosphorylated, leading to STXBP5L increased turnover and subsequent de-repression of insulin secretion. Phosphorylated on serine residues in response to glucose or phorbol esters. Ubiquitinated by the E3 ligase SYVN1, leading to STXBP5L proteasomal degradation. In terms of tissue distribution, detected in kidney, hippocampus and lung carcinoma.

It is found in the cytoplasm. It localises to the cell membrane. The protein localises to the membrane. Its function is as follows. Plays a role in vesicle trafficking and exocytosis inhibition. In pancreatic beta-cells, inhibits insulin secretion probably by interacting with and regulating STX1A and STX4, key t-SNARE proteins involved in the fusion of insulin granules to the plasma membrane. Also plays a role in neurotransmitter release by inhibiting basal acetylcholine release from axon terminals and by preventing synaptic fatigue upon repetitive stimulation. Promotes as well axonal outgrowth. This chain is Syntaxin-binding protein 5-like (STXBP5L), found in Homo sapiens (Human).